The primary structure comprises 251 residues: Ubiquinone/menaquinone biosynthesis C-methyltransferase UbiE (251 aa).

S-adenosyl-L-methionine contacts are provided by residues threonine 74, aspartate 95, asparagine 123–alanine 124, and serine 140.

The protein belongs to the class I-like SAM-binding methyltransferase superfamily. MenG/UbiE family.

It carries out the reaction a 2-demethylmenaquinol + S-adenosyl-L-methionine = a menaquinol + S-adenosyl-L-homocysteine + H(+). The catalysed reaction is a 2-methoxy-6-(all-trans-polyprenyl)benzene-1,4-diol + S-adenosyl-L-methionine = a 5-methoxy-2-methyl-3-(all-trans-polyprenyl)benzene-1,4-diol + S-adenosyl-L-homocysteine + H(+). It functions in the pathway quinol/quinone metabolism; menaquinone biosynthesis; menaquinol from 1,4-dihydroxy-2-naphthoate: step 2/2. It participates in cofactor biosynthesis; ubiquinone biosynthesis. Functionally, methyltransferase required for the conversion of demethylmenaquinol (DMKH2) to menaquinol (MKH2) and the conversion of 2-polyprenyl-6-methoxy-1,4-benzoquinol (DDMQH2) to 2-polyprenyl-3-methyl-6-methoxy-1,4-benzoquinol (DMQH2). This Pectobacterium carotovorum subsp. carotovorum (strain PC1) protein is Ubiquinone/menaquinone biosynthesis C-methyltransferase UbiE.